Reading from the N-terminus, the 287-residue chain is ATP synthase gamma chain (287 aa).

The protein belongs to the ATPase gamma chain family. As to quaternary structure, F-type ATPases have 2 components, CF(1) - the catalytic core - and CF(0) - the membrane proton channel. CF(1) has five subunits: alpha(3), beta(3), gamma(1), delta(1), epsilon(1). CF(0) has three main subunits: a, b and c.

It localises to the cell inner membrane. Produces ATP from ADP in the presence of a proton gradient across the membrane. The gamma chain is believed to be important in regulating ATPase activity and the flow of protons through the CF(0) complex. The chain is ATP synthase gamma chain from Colwellia maris.